A 100-amino-acid chain; its full sequence is NADH-quinone oxidoreductase subunit K (100 aa).

The next 3 helical transmembrane spans lie at 4–24 (TSYY…GVLL), 29–49 (IVVF…LVAF), and 60–80 (VIVF…LALL).

It belongs to the complex I subunit 4L family. As to quaternary structure, NDH-1 is composed of 14 different subunits. Subunits NuoA, H, J, K, L, M, N constitute the membrane sector of the complex.

It localises to the cell membrane. It catalyses the reaction a quinone + NADH + 5 H(+)(in) = a quinol + NAD(+) + 4 H(+)(out). NDH-1 shuttles electrons from NADH, via FMN and iron-sulfur (Fe-S) centers, to quinones in the respiratory chain. The immediate electron acceptor for the enzyme in this species is believed to be ubiquinone. Couples the redox reaction to proton translocation (for every two electrons transferred, four hydrogen ions are translocated across the cytoplasmic membrane), and thus conserves the redox energy in a proton gradient. The polypeptide is NADH-quinone oxidoreductase subunit K (Chloroflexus aurantiacus (strain ATCC 29366 / DSM 635 / J-10-fl)).